A 272-amino-acid chain; its full sequence is NH(3)-dependent NAD(+) synthetase (272 aa).

An ATP-binding site is contributed by 45–52 (GISGGQDS). Asp-51 is a binding site for Mg(2+). Deamido-NAD(+) is bound at residue Arg-138. Thr-158 lines the ATP pocket. Glu-163 is a Mg(2+) binding site. Residues Lys-171 and Asp-178 each coordinate deamido-NAD(+). ATP-binding residues include Lys-187 and Thr-209. 258–259 (HK) contributes to the deamido-NAD(+) binding site.

This sequence belongs to the NAD synthetase family. Homodimer.

The catalysed reaction is deamido-NAD(+) + NH4(+) + ATP = AMP + diphosphate + NAD(+) + H(+). It participates in cofactor biosynthesis; NAD(+) biosynthesis; NAD(+) from deamido-NAD(+) (ammonia route): step 1/1. Functionally, catalyzes the ATP-dependent amidation of deamido-NAD to form NAD. Uses ammonia as a nitrogen source. In Bacillus cereus (strain ATCC 10987 / NRS 248), this protein is NH(3)-dependent NAD(+) synthetase.